Here is a 131-residue protein sequence, read N- to C-terminus: Translation initiation factor 5A (131 aa).

The residue at position 37 (K37) is a Hypusine.

It belongs to the eIF-5A family.

It is found in the cytoplasm. Functions by promoting the formation of the first peptide bond. This chain is Translation initiation factor 5A (eIF5A), found in Methanococcus aeolicus (strain ATCC BAA-1280 / DSM 17508 / OCM 812 / Nankai-3).